The sequence spans 662 residues: Hypoxia-inducible factor 3-alpha (662 aa).

The interval 1 to 25 (MDWDQDRSSTELRKEKSRDAARSRR) is disordered. Residues 12–65 (LRKEKSRDAARSRRSQETEVLYQLAHTLPFARGVSAHLDKASIMRLTISYLRMH) form the bHLH domain. Positions 75–98 (QVRKEGEPLDACYLKALEGFVMVL) are nuclear localization signal. PAS domains are found at residues 80-150 (GEPL…PSLS) and 225-295 (PHPA…LSKG). A nuclear export signal region spans residues 228–272 (ASLEPPLGRGAFLSRHSLDMKFTYCDERIAEVAGYSPDDLIGCSA). Positions 352-379 (EQTEQHTRRPPQLGTSSKKGIPGNSLDP) are disordered. The LRRLL motif lies at 410-413 (LRRL). 2 disordered regions span residues 417–445 (ILDGPPTAATPSTPQAARRPQSPLPADLP) and 459–480 (STARKNKTMETDLDIAQDPDTP). Over residues 421 to 433 (PPTAATPSTPQAA) the composition is skewed to low complexity. The interval 448 to 581 (LAVGLENAHR…SEDKGLELLE (134 aa)) is ODD. Positions 450–501 (VGLENAHRLSTARKNKTMETDLDIAQDPDTPDLEMLAPYISMDDDFQLNSSE) are NTAD. K463 participates in a covalent cross-link: Glycyl lysine isopeptide (Lys-Gly) (interchain with G-Cter in ubiquitin). Acidic residues predominate over residues 469–480 (TDLDIAQDPDTP). An LAPYISMD motif is present at residues 485 to 492 (LAPYISMD). A 4-hydroxyproline modification is found at P487. Positions 500 to 595 (SEQLPKVHRR…KRSPRLEPGS (96 aa)) are disordered. Residues 505–521 (KVHRRPPRTARRPRARS) are compositionally biased toward basic residues. K565 is covalently cross-linked (Glycyl lysine isopeptide (Lys-Gly) (interchain with G-Cter in ubiquitin)). Over residues 572–584 (SEDKGLELLETKP) the composition is skewed to basic and acidic residues.

As to quaternary structure, interacts with ARNT, BAD, BCL2L2, EPAS1, HIF1A, MCL1 and VHL. Post-translationally, in normoxia, hydroxylated on Pro-487 in the oxygen-dependent degradation domain (ODD) by PHD. The hydroxylated proline promotes interaction with VHL, initiating rapid ubiquitination and subsequent proteasomal degradation. Ubiquitinated; ubiquitination occurs in a VHL- and oxygen-dependent pathway and subsequently targeted for proteasomal degradation. Expressed in the perivenous zone of the liver. Expressed in all tissues examined during normoxia. Expressed in brain and lung. Expressed in periportal and perivenous hepatocytes and in endothelial cells of the central vein (at protein level). Highest expression seen in the cerebral cortex, hippocampus, and lung. Low expression in myocardial tissue and liver.

The protein localises to the nucleus. The protein resides in the cytoplasm. Its subcellular location is the nucleus speckle. It localises to the mitochondrion. Functionally, acts as a transcriptional regulator in adaptive response to low oxygen tension. Attenuates the ability of transcription factor HIF1A, EPAS1 and the HIF1A-ARNT complex to bind to hypoxia-responsive elements (HRE) located within the enhancer/promoter of hypoxia-inducible target genes and hence inhibits HRE-driven transcriptional activation. Functions as an inhibitor of angiogenesis in hypoxic cells of the cornea. Plays a role in the development of the cardiorespiratory system. May also be involved in apoptosis. May act as a tumor suppressor. This chain is Hypoxia-inducible factor 3-alpha, found in Rattus norvegicus (Rat).